A 187-amino-acid polypeptide reads, in one-letter code: MPKINGNEIRPGNVLEHNGGLWAAVKVDHVKPGKGGAFAQVEMKNLRNGSKLNERFRSADKVERVRLEQKDQQFLYETDGMLVFMDTETYEQIELPADLLGDRRPFLQDGMTIVVEFYESEALNATVPQKVTCKIVETEPVVKGQTAANSFKPAILDNGVKVMVPPFVGQDEMIIVNTETMEYSERA.

Belongs to the elongation factor P family.

The protein localises to the cytoplasm. It functions in the pathway protein biosynthesis; polypeptide chain elongation. Involved in peptide bond synthesis. Stimulates efficient translation and peptide-bond synthesis on native or reconstituted 70S ribosomes in vitro. Probably functions indirectly by altering the affinity of the ribosome for aminoacyl-tRNA, thus increasing their reactivity as acceptors for peptidyl transferase. This is Elongation factor P from Ruegeria sp. (strain TM1040) (Silicibacter sp.).